A 302-amino-acid chain; its full sequence is Putative S-adenosyl-L-methionine-dependent methyltransferase MRA_0290 (302 aa).

Residues aspartate 126 and 155–156 contribute to the S-adenosyl-L-methionine site; that span reads DL.

This sequence belongs to the UPF0677 family.

Functionally, exhibits S-adenosyl-L-methionine-dependent methyltransferase activity. This is Putative S-adenosyl-L-methionine-dependent methyltransferase MRA_0290 from Mycobacterium tuberculosis (strain ATCC 25177 / H37Ra).